The primary structure comprises 123 residues: Small ribosomal subunit protein uS12cz/uS12cy (123 aa).

Belongs to the universal ribosomal protein uS12 family. In terms of assembly, part of the 30S ribosomal subunit.

The protein resides in the plastid. The protein localises to the chloroplast. In terms of biological role, with S4 and S5 plays an important role in translational accuracy. Located at the interface of the 30S and 50S subunits. This chain is Small ribosomal subunit protein uS12cz/uS12cy (rps12-A), found in Drimys granadensis.